We begin with the raw amino-acid sequence, 227 residues long: Lipoprotein-releasing system ATP-binding protein LolD (227 aa).

Residues 6-227 (LKCENINKFY…MQDGLLKEGA (222 aa)) form the ABC transporter domain. An ATP-binding site is contributed by 42 to 49 (GSSGSGKS).

This sequence belongs to the ABC transporter superfamily. Lipoprotein translocase (TC 3.A.1.125) family. As to quaternary structure, the complex is composed of two ATP-binding proteins (LolD) and two transmembrane proteins (LolC and LolE).

The protein localises to the cell inner membrane. Its function is as follows. Part of the ABC transporter complex LolCDE involved in the translocation of mature outer membrane-directed lipoproteins, from the inner membrane to the periplasmic chaperone, LolA. Responsible for the formation of the LolA-lipoprotein complex in an ATP-dependent manner. In Haemophilus influenzae (strain 86-028NP), this protein is Lipoprotein-releasing system ATP-binding protein LolD.